Reading from the N-terminus, the 27-residue chain is Agglutinin alpha chain (27 aa).

Positions 1–27 (GKAFDDGAFTGIREINLSINKETAIGD) constitute a Jacalin-type lectin domain.

This sequence belongs to the jacalin lectin family. Tetramer of four alpha chains associated with two or four beta chains. In terms of processing, N-glycosylated.

In terms of biological role, D-galactose-specific lectin, binds the T-antigen structure Gal-beta1,3-GalNAc (Thomsen-Friedenreich-antigen-specific lectin). Potent and selective stimulant of distinct T- and B-cell functions. Shows a unique ability to specifically recognize IgA-1 from human serum. This chain is Agglutinin alpha chain, found in Artocarpus tonkinensis.